The chain runs to 494 residues: Cardiolipin synthase (494 aa).

2 helical membrane-spanning segments follow: residues 14–34 (IILN…AFTI) and 45–65 (IWAW…LYLL). PLD phosphodiesterase domains are found at residues 229 to 256 (MNNR…GDEY) and 407 to 434 (DNGF…DHRS). Active-site residues include histidine 234, lysine 236, aspartate 241, histidine 412, lysine 414, and aspartate 419.

The protein belongs to the phospholipase D family. Cardiolipin synthase subfamily.

Its subcellular location is the cell membrane. The enzyme catalyses 2 a 1,2-diacyl-sn-glycero-3-phospho-(1'-sn-glycerol) = a cardiolipin + glycerol. Its function is as follows. Catalyzes the reversible phosphatidyl group transfer from one phosphatidylglycerol molecule to another to form cardiolipin (CL) (diphosphatidylglycerol) and glycerol. In Staphylococcus aureus (strain Mu50 / ATCC 700699), this protein is Cardiolipin synthase (cls).